The chain runs to 282 residues: 4-diphosphocytidyl-2-C-methyl-D-erythritol kinase (282 aa).

The active site involves lysine 12. 95–105 (PMGGGIGGGSS) is an ATP binding site. Aspartate 137 is a catalytic residue.

This sequence belongs to the GHMP kinase family. IspE subfamily.

It carries out the reaction 4-CDP-2-C-methyl-D-erythritol + ATP = 4-CDP-2-C-methyl-D-erythritol 2-phosphate + ADP + H(+). The protein operates within isoprenoid biosynthesis; isopentenyl diphosphate biosynthesis via DXP pathway; isopentenyl diphosphate from 1-deoxy-D-xylulose 5-phosphate: step 3/6. In terms of biological role, catalyzes the phosphorylation of the position 2 hydroxy group of 4-diphosphocytidyl-2C-methyl-D-erythritol. In Pseudomonas paraeruginosa (strain DSM 24068 / PA7) (Pseudomonas aeruginosa (strain PA7)), this protein is 4-diphosphocytidyl-2-C-methyl-D-erythritol kinase.